A 989-amino-acid chain; its full sequence is MLEKSKSRKENDRKDRDRSKKENGRRDTTEMRSRVKRCDSEEEERIRIRRDRKSSDFEEEEYERDSKRRGEDKGRGRRERDRDRGKYLKRDRERREREKEKGRKKQKKERSREDCNEESDDVKCGLKRKRTERSRHGDDDVEKKTRDEQVEDEQKQLAEEVEKRRRRVQEWQELKRQNEEAQIESKGPETGKAWTLDGESDDEVKSDSEMDVDRDTKLENGGDAKMVASENETAVTVSENGGDRAADEDEIDPLDAFMNTMVLPEVEKLSNIVIDGILDFKMNGKETGDQAKKGFNKAALGRIIQGEDSDSDYSEPKSDDDPSLDEDDEEFMKRVKKTKAEKLSLVDHSKIEYEPFRKNFYIEVKDISRMTQDAVNAYRKELELKVHGKDVPRPIQFWHQTGLTSKILDTLKKLNYEKPMPIQAQALPIIMSGRDCIGVAKTGSGKTLGFVLPMLRHIKDQPPVEAGDGPIGLVMAPTRELVQQIYSDIRKFSKALGIICVPVYGGSGVAQQISELKRGTEIVVCTPGRMIDILCTSSGKITNLRRVTYLVMDEADRMFDMGFEPQITRIVQNIRPDRQTVLFSATFPRQVETLARKVLNKPVEIQVGGRSVVNKDITQLVEIRPESERFSRLLELLGEWYEKGKVLVFVRSQEKSISDFKSDVCNLLIATSVAARGLDVKELELVVNFDAPNHYEDYVHRVGRTGRAGRKGCAVTFISEDDAKYAPDLVKALELSEQPVPDDVKAVAEGFMAKVKQGIEQAHGTGYGGSGFKFNEEEDEVRKAAKKAQAKEYGFEEEKSDSEDENDVVRKAGGDISQQQITLAQIAAIASAASKAPVTANQLLPNGGGLATEPGIPPTDGAGRVAAMIAAANVQQYLAKIQADAIPEHYEAELEINDFPQNARWKVTHKETLGPISEWSGASITTRGKFYEAGRIPGPEERKLYLFVEGPTEISVKTAKAELKRVLEDITNQTFSLPGGAQSGRYSVL.

2 stretches are compositionally biased toward basic and acidic residues: residues 1–39 (MLEK…KRCD) and 64–101 (RDSK…EKEK). 2 disordered regions span residues 1–248 (MLEK…AADE) and 305–330 (QGED…DDEE). Positions 88-182 (LKRDRERRER…ELKRQNEEAQ (95 aa)) form a coiled coil. The residue at position 119 (S119) is a Phosphoserine. Residues 134–179 (SRHGDDDVEKKTRDEQVEDEQKQLAEEVEKRRRRVQEWQELKRQNE) show a composition bias toward basic and acidic residues. Position 200 is a phosphoserine (S200). Residues 203-222 (EVKSDSEMDVDRDTKLENGG) show a composition bias toward basic and acidic residues. The segment covering 230–239 (ENETAVTVSE) has biased composition (polar residues). Over residues 321-330 (DPSLDEDDEE) the composition is skewed to acidic residues. The short motif at 396–424 (QFWHQTGLTSKILDTLKKLNYEKPMPIQA) is the Q motif element. The Helicase ATP-binding domain occupies 427–605 (LPIIMSGRDC…RKVLNKPVEI (179 aa)). 440–447 (AKTGSGKT) contributes to the ATP binding site. The DEAD box signature appears at 553–556 (DEAD). One can recognise a Helicase C-terminal domain in the interval 590-748 (QVETLARKVL…PVPDDVKAVA (159 aa)).

Belongs to the DEAD box helicase family. DDX46/PRP5 subfamily.

The enzyme catalyses ATP + H2O = ADP + phosphate + H(+). This Arabidopsis thaliana (Mouse-ear cress) protein is DEAD-box ATP-dependent RNA helicase 45 (RH45).